The following is a 245-amino-acid chain: Bis(5'-nucleosyl)-tetraphosphatase PrpE [asymmetrical] (245 aa).

Belongs to the PrpE family. Ni(2+) is required as a cofactor.

The enzyme catalyses P(1),P(4)-bis(5'-guanosyl) tetraphosphate + H2O = GMP + GTP + 2 H(+). Asymmetrically hydrolyzes Ap4p to yield AMP and ATP. This chain is Bis(5'-nucleosyl)-tetraphosphatase PrpE [asymmetrical], found in Geobacillus sp. (strain WCH70).